The primary structure comprises 215 residues: Probable GTP-binding protein EngB (215 aa).

Residues Gly31–Gln215 enclose the EngB-type G domain. GTP-binding positions include Gly39 to Ser46, Gly66 to Glu70, Asp93 to Gly96, Thr160 to Asp163, and Thr194 to Ala196. Residues Ser46 and Thr68 each coordinate Mg(2+).

The protein belongs to the TRAFAC class TrmE-Era-EngA-EngB-Septin-like GTPase superfamily. EngB GTPase family. Mg(2+) serves as cofactor.

Necessary for normal cell division and for the maintenance of normal septation. This Bartonella bacilliformis (strain ATCC 35685 / KC583 / Herrer 020/F12,63) protein is Probable GTP-binding protein EngB.